Reading from the N-terminus, the 780-residue chain is Replication origin-binding protein (780 aa).

The Helicase ATP-binding domain maps to 39–195 (SFENVRQPIK…AAFKPDTQIA (157 aa)). 52–59 (AAMGSGKT) is a binding site for ATP.

The protein belongs to the herpesviridae OriBP family.

Probably involved in DNA replication. Binds the origin of replication (ori). This is Replication origin-binding protein (U73) from Homo sapiens (Human).